A 124-amino-acid chain; its full sequence is Prefoldin subunit beta (124 aa).

Belongs to the prefoldin subunit beta family. Heterohexamer of two alpha and four beta subunits.

It localises to the cytoplasm. In terms of biological role, molecular chaperone capable of stabilizing a range of proteins. Seems to fulfill an ATP-independent, HSP70-like function in archaeal de novo protein folding. This Thermoplasma acidophilum (strain ATCC 25905 / DSM 1728 / JCM 9062 / NBRC 15155 / AMRC-C165) protein is Prefoldin subunit beta (pfdB).